A 166-amino-acid polypeptide reads, in one-letter code: CDP-archaeol synthase (166 aa).

4 helical membrane passes run 42–62 (LVLG…VQDA), 73–93 (VLSV…KSFV), 103–123 (AAWP…LLLI), and 128–148 (FAAV…TPLL).

Belongs to the CDP-archaeol synthase family. Requires Mg(2+) as cofactor.

The protein resides in the cell membrane. It carries out the reaction 2,3-bis-O-(geranylgeranyl)-sn-glycerol 1-phosphate + CTP + H(+) = CDP-2,3-bis-O-(geranylgeranyl)-sn-glycerol + diphosphate. It functions in the pathway membrane lipid metabolism; glycerophospholipid metabolism. Catalyzes the formation of CDP-2,3-bis-(O-geranylgeranyl)-sn-glycerol (CDP-archaeol) from 2,3-bis-(O-geranylgeranyl)-sn-glycerol 1-phosphate (DGGGP) and CTP. This reaction is the third ether-bond-formation step in the biosynthesis of archaeal membrane lipids. The polypeptide is CDP-archaeol synthase (Methanosphaerula palustris (strain ATCC BAA-1556 / DSM 19958 / E1-9c)).